We begin with the raw amino-acid sequence, 392 residues long: Phosphoglycerate kinase (392 aa).

Substrate contacts are provided by residues 21–23 (DFN), R36, 59–62 (HLGR), R118, and R151. Residues K201, G292, E323, and 349–352 (GGDS) each bind ATP.

It belongs to the phosphoglycerate kinase family. In terms of assembly, monomer.

The protein resides in the cytoplasm. The catalysed reaction is (2R)-3-phosphoglycerate + ATP = (2R)-3-phospho-glyceroyl phosphate + ADP. It participates in carbohydrate degradation; glycolysis; pyruvate from D-glyceraldehyde 3-phosphate: step 2/5. This chain is Phosphoglycerate kinase, found in Borrelia hermsii (strain HS1 / DAH).